A 412-amino-acid polypeptide reads, in one-letter code: Adenosine receptor A2a (412 aa).

The Extracellular segment spans residues 1–7; that stretch reads MSTMGSW. A helical membrane pass occupies residues 8–32; it reads VYITVELAIAVLAILGNVLVCWAVW. The Cytoplasmic segment spans residues 33–42; the sequence is LNSNLQNVTN. A helical transmembrane segment spans residues 43–66; sequence YFVVSLAAADIAVGVLAIPFAITI. Over 67-77 the chain is Extracellular; it reads STGFCAACHNC. Intrachain disulfides connect Cys71/Cys159, Cys74/Cys146, and Cys77/Cys166. A helical transmembrane segment spans residues 78 to 100; that stretch reads LFFACFVLVLTQSSIFSLLAIAI. Residues 101-120 are Cytoplasmic-facing; the sequence is DRYIAIRIPLRYNGLVTGTR. A helical membrane pass occupies residues 121-143; it reads AKGIIAVCWVLSFAIGLTPMLGW. Residues 144-173 lie on the Extracellular side of the membrane; sequence NNCSQPKEGRNYSQGCGEGQVACLFEDVVP. 2 N-linked (GlcNAc...) asparagine glycosylation sites follow: Asn145 and Asn154. Glu169 is an adenosine binding site. The chain crosses the membrane as a helical span at residues 174-198; sequence MNYMVYYNFFAFVLVPLLLMLGVYL. The Cytoplasmic portion of the chain corresponds to 199-234; that stretch reads RIFLAARRQLKQMESQPLPGERARSTLQKEVHAAKS. A helical membrane pass occupies residues 235–258; sequence LAIIVGLFALCWLPLHIINCFTFF. Asn253 provides a ligand contact to adenosine. Cysteines 259 and 262 form a disulfide. At 259–266 the chain is on the extracellular side; that stretch reads CPECSHAP. Residues 267–290 form a helical membrane-spanning segment; the sequence is LWLMYLTIVLSHTNSVVNPFIYAY. Residues Ser277 and His278 each contribute to the adenosine site. At 291–412 the chain is on the cytoplasmic side; the sequence is RIREFRQTFR…PLAQDGAGVS (122 aa). The tract at residues 392-412 is disordered; it reads GACPESPGLEGPLAQDGAGVS.

Belongs to the G-protein coupled receptor 1 family. Interacts (via cytoplasmic C-terminal domain) with USP4; the interaction is direct. May interact with DRD4. Interacts with NECAB2. Interacts (via cytoplasmic C-terminal domain) with GAS2L2; interaction enhances receptor-mediated adenylyl cyclase activity. In terms of processing, ubiquitinated. Deubiquitinated by USP4; leading to stabilization and expression at the cell surface.

The protein resides in the cell membrane. Receptor for adenosine. The activity of this receptor is mediated by G proteins which activate adenylyl cyclase. This chain is Adenosine receptor A2a (ADORA2A), found in Canis lupus familiaris (Dog).